Reading from the N-terminus, the 486-residue chain is N-succinylglutamate 5-semialdehyde dehydrogenase (486 aa).

220–225 is a binding site for NAD(+); the sequence is GSSRTG. Residues Glu243 and Cys277 contribute to the active site.

This sequence belongs to the aldehyde dehydrogenase family. AstD subfamily.

It carries out the reaction N-succinyl-L-glutamate 5-semialdehyde + NAD(+) + H2O = N-succinyl-L-glutamate + NADH + 2 H(+). The protein operates within amino-acid degradation; L-arginine degradation via AST pathway; L-glutamate and succinate from L-arginine: step 4/5. Its function is as follows. Catalyzes the NAD-dependent reduction of succinylglutamate semialdehyde into succinylglutamate. This Shewanella baltica (strain OS185) protein is N-succinylglutamate 5-semialdehyde dehydrogenase.